The following is a 293-amino-acid chain: Nucleotide-binding protein CKR_3143 (293 aa).

8–15 is a binding site for ATP; sequence GLSGAGKT. 59–62 is a binding site for GTP; sequence DIRG.

This sequence belongs to the RapZ-like family.

Functionally, displays ATPase and GTPase activities. This chain is Nucleotide-binding protein CKR_3143, found in Clostridium kluyveri (strain NBRC 12016).